The following is a 419-amino-acid chain: Tyrosine--tRNA ligase (419 aa).

Residue Tyr34 coordinates L-tyrosine. A 'HIGH' region motif is present at residues 39-48 (PTADSLHLGH). L-tyrosine-binding residues include Tyr169 and Gln173. The 'KMSKS' region signature appears at 229–233 (KFGKS). Lys232 is a binding site for ATP. An S4 RNA-binding domain is found at 352-419 (LNIIDLLVTS…KKKYFVLNFK (68 aa)).

The protein belongs to the class-I aminoacyl-tRNA synthetase family. TyrS type 1 subfamily. Homodimer.

The protein resides in the cytoplasm. The enzyme catalyses tRNA(Tyr) + L-tyrosine + ATP = L-tyrosyl-tRNA(Tyr) + AMP + diphosphate + H(+). Its function is as follows. Catalyzes the attachment of tyrosine to tRNA(Tyr) in a two-step reaction: tyrosine is first activated by ATP to form Tyr-AMP and then transferred to the acceptor end of tRNA(Tyr). This is Tyrosine--tRNA ligase from Streptococcus agalactiae serotype V (strain ATCC BAA-611 / 2603 V/R).